The following is a 76-amino-acid chain: Conotoxin VnMSGL-0112 (76 aa).

A signal peptide spans 1 to 20; the sequence is MSGLGIMVLTLLLLVSMATS. The propeptide occupies 21 to 45; sequence HQDGRGKQATQRDAINVRRRRSITR. 3 disulfides stabilise this stretch: cysteine 49–cysteine 61, cysteine 53–cysteine 70, and cysteine 60–cysteine 74.

Belongs to the conotoxin O3 superfamily. Expressed by the venom duct.

It is found in the secreted. The protein is Conotoxin VnMSGL-0112 of Conus ventricosus (Mediterranean cone).